A 134-amino-acid polypeptide reads, in one-letter code: Ribonuclease VapC1 (134 aa).

The PINc domain maps to 3–132; that stretch reads YMLDTNIIIY…RITDLQWQDW (130 aa). Residues D6 and D99 each coordinate Mg(2+).

This sequence belongs to the PINc/VapC protein family. Mg(2+) is required as a cofactor.

Toxic component of a type II toxin-antitoxin (TA) system. Acts as an RNase, its toxic effect is neutralized by VapB1 antitoxin. This chain is Ribonuclease VapC1, found in Haemophilus influenzae (strain ATCC 51907 / DSM 11121 / KW20 / Rd).